The sequence spans 494 residues: GDP-fucose protein O-fucosyltransferase 4 (494 aa).

The Cytoplasmic segment spans residues 1-7 (MAARYTE). Residues 8–24 (AVLAALGVLSVCSASSS) form a helical; Signal-anchor for type II membrane protein membrane-spanning segment. The Lumenal portion of the chain corresponds to 25–494 (SGSGASGKAG…EIFMKRNKNL (470 aa)). An N-linked (GlcNAc...) asparagine glycan is attached at Asn-167. Cysteines 390 and 393 form a disulfide.

Belongs to the glycosyltransferase 10 family.

It is found in the endoplasmic reticulum membrane. It carries out the reaction L-threonyl-[protein] + GDP-beta-L-fucose = 3-O-(alpha-L-fucosyl)-L-threonyl-[protein] + GDP + H(+). The catalysed reaction is L-seryl-[protein] + GDP-beta-L-fucose = 3-O-(alpha-L-fucosyl)-L-seryl-[protein] + GDP + H(+). The protein operates within protein modification; protein glycosylation. In terms of biological role, protein O-fucosyltransferase that specifically catalyzes O-fucosylation of serine or threonine residues in EMI domains of target proteins, such as MMRN1, MMRN2 and EMID1. Attaches fucose through an O-glycosidic linkage. O-fucosylation of EMI domain-containing proteins may be required for facilitating protein folding and secretion. Also shows minor alpha-(1,3)-fucosyltransferase activity toward activity toward biantennary N-glycan acceptors. However, this was tested with a library of synthetic substrates and this activity is unsure in vivo. The protein is GDP-fucose protein O-fucosyltransferase 4 (Fut11) of Rattus norvegicus (Rat).